A 694-amino-acid polypeptide reads, in one-letter code: Elongation factor G (694 aa).

Positions Glu-8–Thr-287 constitute a tr-type G domain. Residues Ala-17 to Thr-24, Asp-86 to His-90, and Asn-140 to Asp-143 contribute to the GTP site.

The protein belongs to the TRAFAC class translation factor GTPase superfamily. Classic translation factor GTPase family. EF-G/EF-2 subfamily.

Its subcellular location is the cytoplasm. In terms of biological role, catalyzes the GTP-dependent ribosomal translocation step during translation elongation. During this step, the ribosome changes from the pre-translocational (PRE) to the post-translocational (POST) state as the newly formed A-site-bound peptidyl-tRNA and P-site-bound deacylated tRNA move to the P and E sites, respectively. Catalyzes the coordinated movement of the two tRNA molecules, the mRNA and conformational changes in the ribosome. The polypeptide is Elongation factor G (Brucella abortus (strain S19)).